Reading from the N-terminus, the 229-residue chain is Adenylate kinase (229 aa).

Residue 10-15 coordinates ATP; the sequence is GSGKGT. Residues 30–59 are NMP; sequence ESGVIFREHISKGTELGKQAKSYIDKGELV. Residues Ser31, Arg36, 57–59, 84–87, and Gln91 each bind AMP; these read ELV and GFPR. Positions 125 to 164 are LID; that stretch reads GRRICKTNNNHPNNVSIDSIKPDGNNCRVCHGELIVRTDD. Arg126 provides a ligand contact to ATP. 2 residues coordinate AMP: Arg161 and Arg173. ATP is bound at residue Asn209.

Belongs to the adenylate kinase family. In terms of assembly, monomer.

The protein localises to the cytoplasm. It carries out the reaction AMP + ATP = 2 ADP. It participates in purine metabolism; AMP biosynthesis via salvage pathway; AMP from ADP: step 1/1. Its function is as follows. Catalyzes the reversible transfer of the terminal phosphate group between ATP and AMP. Plays an important role in cellular energy homeostasis and in adenine nucleotide metabolism. In Lawsonia intracellularis (strain PHE/MN1-00), this protein is Adenylate kinase.